Here is a 37-residue protein sequence, read N- to C-terminus: Large ribosomal subunit protein bL36c (37 aa).

This sequence belongs to the bacterial ribosomal protein bL36 family.

The protein resides in the plastid. The protein localises to the chloroplast. In Anthoceros angustus (Hornwort), this protein is Large ribosomal subunit protein bL36c (rpl36).